A 129-amino-acid chain; its full sequence is Histone H2A.J (129 aa).

The interval 1–22 (MSGRGKQGGKVRAKAKSRSSRA) is disordered. N-acetylserine is present on S2. At S2 the chain carries Phosphoserine. Position 6 is an N6-acetyllysine (K6). Over residues 7-19 (QGGKVRAKAKSRS) the composition is skewed to basic residues. K10 is subject to N6-lactoyllysine; alternate. Glycyl lysine isopeptide (Lys-Gly) (interchain with G-Cter in ubiquitin) cross-links involve residues K14 and K16. Q105 carries the N5-methylglutamine modification. K120 participates in a covalent cross-link: Glycyl lysine isopeptide (Lys-Gly) (interchain with G-Cter in ubiquitin).

It belongs to the histone H2A family. The nucleosome is a histone octamer containing two molecules each of H2A, H2B, H3 and H4 assembled in one H3-H4 heterotetramer and two H2A-H2B heterodimers. The octamer wraps approximately 147 bp of DNA. Monoubiquitination of Lys-120 (H2AXK119ub) gives a specific tag for epigenetic transcriptional repression. Following DNA double-strand breaks (DSBs), it is ubiquitinated through 'Lys-63' linkage of ubiquitin moieties. In terms of processing, phosphorylation on Ser-2 is enhanced during mitosis. Phosphorylation on Ser-2 directly represses transcription.

It localises to the nucleus. It is found in the chromosome. In terms of biological role, core component of nucleosome. Nucleosomes wrap and compact DNA into chromatin, limiting DNA accessibility to the cellular machineries which require DNA as a template. Histones thereby play a central role in transcription regulation, DNA repair, DNA replication and chromosomal stability. DNA accessibility is regulated via a complex set of post-translational modifications of histones, also called histone code, and nucleosome remodeling. The protein is Histone H2A.J (H2A-IX) of Gallus gallus (Chicken).